The following is a 402-amino-acid chain: Argininosuccinate synthase (402 aa).

Position 8–16 (Ala8–Ser16) interacts with ATP. L-citrulline-binding residues include Tyr86 and Ser91. ATP is bound at residue Gly116. Positions 118, 122, and 123 each coordinate L-aspartate. Position 122 (Asn122) interacts with L-citrulline. L-citrulline contacts are provided by Arg126, Ser175, Ser184, Glu260, and Tyr272.

Belongs to the argininosuccinate synthase family. Type 1 subfamily. Homotetramer.

The protein resides in the cytoplasm. The catalysed reaction is L-citrulline + L-aspartate + ATP = 2-(N(omega)-L-arginino)succinate + AMP + diphosphate + H(+). Its pathway is amino-acid biosynthesis; L-arginine biosynthesis; L-arginine from L-ornithine and carbamoyl phosphate: step 2/3. This chain is Argininosuccinate synthase, found in Clostridium novyi (strain NT).